Consider the following 512-residue polypeptide: Cercosporin MFS transporter CTB4 (512 aa).

The next 12 helical transmembrane spans lie at 72 to 92 (WVIT…SSVF), 110 to 130 (VVLG…IFWG), 142 to 162 (LLAG…ARSL), 170 to 190 (FLGG…LADI), 202 to 222 (TVGA…SVLV), 230 to 250 (WIAN…FPFL), 306 to 326 (ILLM…NFFL), 343 to 363 (ASLP…LLSF), 383 to 403 (LLLM…FAWT), 407 to 427 (TMNP…IHLI), 456 to 476 (LFAA…GVKW), and 480 to 500 (ILAL…YFGA).

Belongs to the major facilitator superfamily. CAR1 family.

It is found in the cell membrane. In terms of biological role, MFS transporter; part of the gene cluster that mediates the biosynthesis of cercosporin, a light-activated, non-host-selective toxin. The perylenequinone chromophore of cercosporin absorbs light energy to attain an electronically-activated triplet state and produces active oxygen species such as the hydroxyl radical, superoxide, hydrogen peroxide or singlet oxygen upon reaction with oxygen molecules. These reactive oxygen species cause damage to various cellular components including lipids, proteins and nucleic acids. Responsible for secretion and accumulation of cercosporin, but does not play any roles in self-protection against the toxicity of cercosporin. The chain is Cercosporin MFS transporter CTB4 from Cercospora nicotianae (Barn spot disease fungus).